We begin with the raw amino-acid sequence, 502 residues long: Glycerol kinase (502 aa).

Residue Thr-14 coordinates ADP. ATP contacts are provided by Thr-14, Thr-15, and Ser-16. Thr-14 contributes to the sn-glycerol 3-phosphate binding site. Arg-18 lines the ADP pocket. Sn-glycerol 3-phosphate-binding residues include Arg-84, Glu-85, Tyr-136, and Asp-246. 5 residues coordinate glycerol: Arg-84, Glu-85, Tyr-136, Asp-246, and Gln-247. Thr-268 and Gly-311 together coordinate ADP. Positions 268, 311, 315, and 412 each coordinate ATP. The ADP site is built by Gly-412 and Asn-416.

Belongs to the FGGY kinase family. In terms of assembly, homotetramer and homodimer (in equilibrium). Heterodimer with EIIA-Glc. Binds 1 zinc ion per glycerol kinase EIIA-Glc dimer. The zinc ion is important for dimerization.

It carries out the reaction glycerol + ATP = sn-glycerol 3-phosphate + ADP + H(+). The protein operates within polyol metabolism; glycerol degradation via glycerol kinase pathway; sn-glycerol 3-phosphate from glycerol: step 1/1. With respect to regulation, activity of this regulatory enzyme is affected by several metabolites. Allosterically and non-competitively inhibited by fructose 1,6-bisphosphate (FBP) and unphosphorylated phosphocarrier protein EIIA-Glc (III-Glc), an integral component of the bacterial phosphotransferase (PTS) system. Its function is as follows. Key enzyme in the regulation of glycerol uptake and metabolism. Catalyzes the phosphorylation of glycerol to yield sn-glycerol 3-phosphate. The chain is Glycerol kinase from Citrobacter koseri (strain ATCC BAA-895 / CDC 4225-83 / SGSC4696).